Reading from the N-terminus, the 94-residue chain is Viral macrophage inflammatory protein 2 (94 aa).

An N-terminal signal peptide occupies residues 1 to 20 (MDTKGILLVAVLTALLCLQS). Intrachain disulfides connect cysteine 34/cysteine 58 and cysteine 35/cysteine 74.

It belongs to the intercrine beta (chemokine CC) family. In terms of assembly, monomer. Interacts with human chemokine receptor CXCR4.

The protein localises to the secreted. Functionally, blocks infection by several different human immunodeficiency virus type 1 (HIV-1) strains. This occurs because vMIP-II binds to a wide range of chemokine receptors. May form part of the response to host defenses contributing to virus-induced neoplasia and may have relevance to KSHV and HIV-I interactions. This is Viral macrophage inflammatory protein 2 (ORF K4) from Human herpesvirus 8 type P (isolate GK18) (HHV-8).